We begin with the raw amino-acid sequence, 454 residues long: Divalent metal cation transporter MntH (454 aa).

The segment at 1 to 21 (MSDAEATAPRSSWRFAGRDED) is disordered. 11 consecutive transmembrane segments (helical) span residues 45–65 (LFAF…PGNW), 78–98 (TLLF…ALAA), 122–142 (FVLW…EVIG), 153–173 (IPLI…LLLM), 182–202 (AFVI…IFVA), 220–240 (IVTN…TVMP), 275–295 (IALM…AVAF), 312–332 (LLSP…ALLA), 368–388 (GLAI…GTGQ), 389–409 (LLVF…VPLV), and 426–446 (GVAA…FKLL).

It belongs to the NRAMP family.

Its subcellular location is the cell inner membrane. H(+)-stimulated, divalent metal cation uptake system. The polypeptide is Divalent metal cation transporter MntH (Mesorhizobium japonicum (strain LMG 29417 / CECT 9101 / MAFF 303099) (Mesorhizobium loti (strain MAFF 303099))).